The primary structure comprises 116 residues: MHILFLFIFHCLAFKDLIFFKQYVPFAAAGGYPISFLFIKVLTASTNLLLSSSSGGSWNKLSKESQLLKVILTHFLVPIFFFLFQYIILSEDRQQERQPKFRDNAKFDGHAKTCHI.

The next 2 membrane-spanning stretches (helical) occupy residues 24–44 (VPFA…VLTA) and 70–90 (VILT…IILS).

It localises to the membrane. This is an uncharacterized protein from Saccharomyces cerevisiae (strain ATCC 204508 / S288c) (Baker's yeast).